Here is a 267-residue protein sequence, read N- to C-terminus: Acetyl-coenzyme A carboxylase carboxyl transferase subunit beta 1 (267 aa).

In terms of domain architecture, CoA carboxyltransferase N-terminal spans 9 to 267 (TWQACPKCGR…NYGIGRSAHG (259 aa)). Zn(2+) is bound by residues Cys-13, Cys-16, Cys-31, and Cys-34. Residues 13-34 (CPKCGRHVHQRQWGTYQQCPYC) form a C4-type zinc finger.

The protein belongs to the AccD/PCCB family. In terms of assembly, acetyl-CoA carboxylase is a heterohexamer composed of biotin carboxyl carrier protein (AccB), biotin carboxylase (AccC) and two subunits each of ACCase subunit alpha (AccA) and ACCase subunit beta (AccD). Zn(2+) is required as a cofactor.

It is found in the cytoplasm. The enzyme catalyses N(6)-carboxybiotinyl-L-lysyl-[protein] + acetyl-CoA = N(6)-biotinyl-L-lysyl-[protein] + malonyl-CoA. It participates in lipid metabolism; malonyl-CoA biosynthesis; malonyl-CoA from acetyl-CoA: step 1/1. Component of the acetyl coenzyme A carboxylase (ACC) complex. Biotin carboxylase (BC) catalyzes the carboxylation of biotin on its carrier protein (BCCP) and then the CO(2) group is transferred by the transcarboxylase to acetyl-CoA to form malonyl-CoA. The chain is Acetyl-coenzyme A carboxylase carboxyl transferase subunit beta 1 from Lactiplantibacillus plantarum (strain ATCC BAA-793 / NCIMB 8826 / WCFS1) (Lactobacillus plantarum).